Consider the following 175-residue polypeptide: Cytochrome c homolog (175 aa).

The Cytoplasmic portion of the chain corresponds to 1 to 8 (MSGKELNK). The chain crosses the membrane as a helical; Signal-anchor span at residues 9–29 (IVAAILFASLIAMMVGFVANI). Topologically, residues 30-175 (LYKPTLELQH…LFLKTYVHDK (146 aa)) are periplasmic. Heme c is bound by residues C84, C87, H88, and M150.

This sequence belongs to the cytochrome c family. In terms of processing, binds 1 heme c group covalently per subunit.

The protein resides in the cell membrane. May be involved in electron transfer from bc1 complex to aa3. The sequence is that of Cytochrome c homolog (cycM) from Rickettsia conorii (strain ATCC VR-613 / Malish 7).